The chain runs to 147 residues: Auxin-responsive protein SAUR41 (147 aa).

The protein belongs to the ARG7 family. As to expression, specifically expressed in the quiescent center and cortex or endodermis initials of root stem niches. Expressed in vascular tissues from hypocotyls, petioles and cotyledons.

It localises to the cytoplasm. Plays a role in the regulation of cell expansion, root meristem patterning and auxin transport. This chain is Auxin-responsive protein SAUR41, found in Arabidopsis thaliana (Mouse-ear cress).